We begin with the raw amino-acid sequence, 176 residues long: Inner membrane-spanning protein YciB (176 aa).

5 helical membrane-spanning segments follow: residues 24-44 (TATA…AFRH), 49-69 (PMLW…LVLH), 76-96 (WKPT…ALGF), 121-141 (YVWA…AYNF), and 149-169 (FKLF…SLWL).

Belongs to the YciB family.

It localises to the cell inner membrane. In terms of biological role, plays a role in cell envelope biogenesis, maintenance of cell envelope integrity and membrane homeostasis. This is Inner membrane-spanning protein YciB from Paraburkholderia phymatum (strain DSM 17167 / CIP 108236 / LMG 21445 / STM815) (Burkholderia phymatum).